Reading from the N-terminus, the 162-residue chain is Caveolin-2 (162 aa).

Over 1–86 the chain is Cytoplasmic; that stretch reads MGLETEKADV…FEISKYVIYK (86 aa). Position 19 is a phosphotyrosine; by SRC (Y19). Residues S20 and S23 each carry the phosphoserine modification. Y27 carries the phosphotyrosine; by SRC modification. The residue at position 36 (S36) is a Phosphoserine. An intramembrane region (helical) is located at residues 87–107; the sequence is FLTVFLAIPLAFTAGILFATL. The Cytoplasmic segment spans residues 108–162; that stretch reads SCLHIWIIMPFVKTCLMVLPSVQTIWRSVTDVIIAPLCTSIGRICSSVSLQVSHD.

It belongs to the caveolin family. In terms of assembly, monomer or homodimer. Interacts with CAV1; the interaction forms a stable heterooligomeric complex that is required for targeting to lipid rafts and for caveolae formation. Tyrosine phosphorylated forms do not form heterooligomers with the Tyr-19-phosphorylated form existing as a monomer or dimer, and the Tyr-27-form as a monomer only. Interacts (tyrosine phosphorylated form) with the SH2 domain-containing proteins, RASA1, NCK1 and SRC. Interacts (tyrosine phosphorylated form) with INSR, the interaction (Tyr-27-phosphorylated form) is increased on insulin stimulation. Interacts (Tyr-19 phosphorylated form) with MAPK1 (phosphorylated form); the interaction, promoted by insulin, leads to nuclear location and MAPK1 activation. Interacts with STAT3; the interaction is increased on insulin-induced tyrosine phosphorylation leading to STAT activation. Phosphorylated on serine and tyrosine residues. CAV1 promotes phosphorylation on Ser-23 which then targets the complex to the plasma membrane, lipid rafts and caveolae. Phosphorylation on Ser-36 appears to modulate mitosis in endothelial cells. Phosphorylation on both Tyr-19 and Tyr-27 is required for insulin-induced 'Ser-727' phosphorylation of STAT3 and its activation. Phosphorylation on Tyr-19 is required for insulin-induced phosphorylation of MAPK1 and DNA binding of STAT3. Tyrosine phosphorylation is induced by both EGF and insulin (By. similarity).

It is found in the nucleus. Its subcellular location is the cytoplasm. The protein localises to the golgi apparatus membrane. The protein resides in the cell membrane. It localises to the membrane. It is found in the caveola. In terms of biological role, may act as a scaffolding protein within caveolar membranes. Interacts directly with G-protein alpha subunits and can functionally regulate their activity. Acts as an accessory protein in conjunction with CAV1 in targeting to lipid rafts and driving caveolae formation. The Ser-36 phosphorylated form has a role in modulating mitosis in endothelial cells. Positive regulator of cellular mitogenesis of the MAPK signaling pathway. Required for the insulin-stimulated nuclear translocation and activation of MAPK1 and STAT3, and the subsequent regulation of cell cycle progression. This chain is Caveolin-2 (CAV2), found in Atelerix albiventris (Middle-African hedgehog).